The primary structure comprises 256 residues: Hemin import ATP-binding protein HmuV (256 aa).

One can recognise an ABC transporter domain in the interval 2 to 238 (ISAQNLVYSL…QALTMLYGAD (237 aa)). 34-41 (GPNGAGKS) contributes to the ATP binding site.

It belongs to the ABC transporter superfamily. Heme (hemin) importer (TC 3.A.1.14.5) family. As to quaternary structure, the complex is composed of two ATP-binding proteins (HmuV), two transmembrane proteins (HmuU) and a solute-binding protein (HmuT).

Its subcellular location is the cell inner membrane. Part of the ABC transporter complex HmuTUV involved in hemin import. Responsible for energy coupling to the transport system. The sequence is that of Hemin import ATP-binding protein HmuV from Shigella dysenteriae serotype 1 (strain Sd197).